A 702-amino-acid polypeptide reads, in one-letter code: Ribosomal RNA large subunit methyltransferase K/L (702 aa).

Positions 43-154 constitute a THUMP domain; the sequence is LVYQSLMWSR…KETASIALDL (112 aa).

This sequence belongs to the methyltransferase superfamily. RlmKL family.

The protein localises to the cytoplasm. It catalyses the reaction guanosine(2445) in 23S rRNA + S-adenosyl-L-methionine = N(2)-methylguanosine(2445) in 23S rRNA + S-adenosyl-L-homocysteine + H(+). It carries out the reaction guanosine(2069) in 23S rRNA + S-adenosyl-L-methionine = N(2)-methylguanosine(2069) in 23S rRNA + S-adenosyl-L-homocysteine + H(+). Its function is as follows. Specifically methylates the guanine in position 2445 (m2G2445) and the guanine in position 2069 (m7G2069) of 23S rRNA. The polypeptide is Ribosomal RNA large subunit methyltransferase K/L (Shigella boydii serotype 4 (strain Sb227)).